A 478-amino-acid chain; its full sequence is Proline--tRNA ligase (478 aa).

This sequence belongs to the class-II aminoacyl-tRNA synthetase family. ProS type 3 subfamily. In terms of assembly, homodimer.

Its subcellular location is the cytoplasm. It carries out the reaction tRNA(Pro) + L-proline + ATP = L-prolyl-tRNA(Pro) + AMP + diphosphate. Catalyzes the attachment of proline to tRNA(Pro) in a two-step reaction: proline is first activated by ATP to form Pro-AMP and then transferred to the acceptor end of tRNA(Pro). In Ruminiclostridium cellulolyticum (strain ATCC 35319 / DSM 5812 / JCM 6584 / H10) (Clostridium cellulolyticum), this protein is Proline--tRNA ligase.